The following is a 78-amino-acid chain: D-alanyl carrier protein (78 aa).

One can recognise a Carrier domain in the interval 1-78 (MAFRENVLEI…MIITQLEALK (78 aa)). Ser36 is modified (O-(pantetheine 4'-phosphoryl)serine).

This sequence belongs to the DltC family. Post-translationally, 4'-phosphopantetheine is transferred from CoA to a specific serine of apo-DCP.

The protein localises to the cytoplasm. It participates in cell wall biogenesis; lipoteichoic acid biosynthesis. In terms of biological role, carrier protein involved in the D-alanylation of lipoteichoic acid (LTA). The loading of thioester-linked D-alanine onto DltC is catalyzed by D-alanine--D-alanyl carrier protein ligase DltA. The DltC-carried D-alanyl group is further transferred to cell membrane phosphatidylglycerol (PG) by forming an ester bond, probably catalyzed by DltD. D-alanylation of LTA plays an important role in modulating the properties of the cell wall in Gram-positive bacteria, influencing the net charge of the cell wall. The protein is D-alanyl carrier protein of Listeria monocytogenes serotype 4a (strain HCC23).